A 276-amino-acid chain; its full sequence is Phosphatidylglycerol--prolipoprotein diacylglyceryl transferase (276 aa).

7 helical membrane-spanning segments follow: residues 17–37 (FGPFAIHYYALAYITALVLGW), 59–79 (FLSWATLGVVLGGRLGYILFY), 94–114 (VWDGGMSFHGGMLGVAVAILI), 132–152 (VPVPIGLFLGRIANFVNGELW), 177–197 (PSELIEATLEGLVLFIVLLIA), 208–225 (GYLGGMFVMGYGIARTTA), and 235–255 (LGYLMFGLTMGQLLSIPMIVI). A 1,2-diacyl-sn-glycero-3-phospho-(1'-sn-glycerol) is bound at residue Arg142.

Belongs to the Lgt family.

Its subcellular location is the cell inner membrane. The enzyme catalyses L-cysteinyl-[prolipoprotein] + a 1,2-diacyl-sn-glycero-3-phospho-(1'-sn-glycerol) = an S-1,2-diacyl-sn-glyceryl-L-cysteinyl-[prolipoprotein] + sn-glycerol 1-phosphate + H(+). The protein operates within protein modification; lipoprotein biosynthesis (diacylglyceryl transfer). Catalyzes the transfer of the diacylglyceryl group from phosphatidylglycerol to the sulfhydryl group of the N-terminal cysteine of a prolipoprotein, the first step in the formation of mature lipoproteins. This Acidiphilium cryptum (strain JF-5) protein is Phosphatidylglycerol--prolipoprotein diacylglyceryl transferase.